A 51-amino-acid polypeptide reads, in one-letter code: Large ribosomal subunit protein eL39 (51 aa).

Belongs to the eukaryotic ribosomal protein eL39 family.

This is Large ribosomal subunit protein eL39 (RpL39) from Plutella xylostella (Diamondback moth).